The sequence spans 375 residues: Trichodiene synthase (375 aa).

It belongs to the trichodiene synthase family.

It catalyses the reaction (2E,6E)-farnesyl diphosphate = trichodiene + diphosphate. The protein operates within sesquiterpene biosynthesis; trichothecene biosynthesis. In terms of biological role, TS is a member of the terpene cyclase group of enzymes. It catalyzes the isomerization and cyclization of farnesyl pyro-phosphate to form trichodiene, the first cyclic intermediate in the biosynthetic pathway for trichothecenes. It serves to branch trichothecene biosynthesis from the isoprenoid pathway. The polypeptide is Trichodiene synthase (TRI5) (Fusarium asiaticum).